Consider the following 294-residue polypeptide: MTARIIDGKVIAADLRGQVAREVERVKRDHGLTPGLAVVLVGNDPASEVYVRSKHTQTQAAGMASFEHKLPADVAQSELLALIDKLNHDPSVHGILVQLPLPKGLETEIVINAIDPAKDVDGLHPHNAGRLSGGQPALAPCTPLGCIILSKTVHPSLEGLNAIVIGRSNLVGRPLVQLLLNENATVTIAHSRSRDLAALTARADLVYAAVGRPEMVKRDWIKPGATVIDVGINRIPTAEGKTRLVGDVAYAEVAEVAGAITPVPGGVGQMTVACLLVNTLRAACAIAGLPKPAV.

NADP(+) is bound by residues 166-168 (GRS), serine 191, and isoleucine 232.

The protein belongs to the tetrahydrofolate dehydrogenase/cyclohydrolase family. As to quaternary structure, homodimer.

It catalyses the reaction (6R)-5,10-methylene-5,6,7,8-tetrahydrofolate + NADP(+) = (6R)-5,10-methenyltetrahydrofolate + NADPH. It carries out the reaction (6R)-5,10-methenyltetrahydrofolate + H2O = (6R)-10-formyltetrahydrofolate + H(+). It functions in the pathway one-carbon metabolism; tetrahydrofolate interconversion. In terms of biological role, catalyzes the oxidation of 5,10-methylenetetrahydrofolate to 5,10-methenyltetrahydrofolate and then the hydrolysis of 5,10-methenyltetrahydrofolate to 10-formyltetrahydrofolate. In Bradyrhizobium sp. (strain BTAi1 / ATCC BAA-1182), this protein is Bifunctional protein FolD.